A 357-amino-acid chain; its full sequence is MGNCESRELVAQAKQNKIINTELDKAKKTDENIIKLLLLGAGESGKSTVLKQMKIIHNSGFSQEEISNKRNVVCANTVQAMGALLDGMKQLQFDFSTRVCNAHEKLIRETLNDKAEYGPFSDAMFNALTELWADKGVQCAYDKREFFYLHDSAKYFFDAIARVHTPNYVPTENDILHTRVPTMGVIEVNFTIKGKFFRVFDVGGQRSQRKKWIHCFDDAKAMIYVASLSEYDQVLLEDNTTNRMHESIQLFKQVINNKYFVNTSVILFLNKIDLFEEKIVTKKRSLGIAFESFSGPSQDLNAAVAFVEKKYRSMAENKEKNIYCHHTCATDTQQVQYVLDAVLDTILSTKLKGCGLY.

The N-myristoyl glycine moiety is linked to residue G2. C4 is lipidated: S-palmitoyl cysteine. The 326-residue stretch at 32–357 (NIIKLLLLGA…STKLKGCGLY (326 aa)) folds into the G-alpha domain. The tract at residues 35-48 (KLLLLGAGESGKST) is G1 motif. Positions 43, 44, 45, 46, 47, 48, 151, 176, 182, 204, 270, 271, 273, and 329 each coordinate GTP. S47 is a Mg(2+) binding site. Residues 174–182 (DILHTRVPT) form a G2 motif region. T182 serves as a coordination point for Mg(2+). Residues 197-206 (FRVFDVGGQR) are G3 motif. A G4 motif region spans residues 266-273 (ILFLNKID). Residues 327–332 (TCATDT) are G5 motif.

It belongs to the G-alpha family. As to quaternary structure, g proteins are composed of 3 units; alpha, beta and gamma. The alpha chain contains the guanine nucleotide binding site. The cofactor is Mg(2+).

Guanine nucleotide-binding proteins (G proteins) are involved as modulators or transducers in various transmembrane signaling systems. The sequence is that of Guanine nucleotide-binding protein alpha-1 subunit (gpa-1) from Caenorhabditis elegans.